Reading from the N-terminus, the 463-residue chain is uncharacterized protein (463 aa).

Belongs to the mycobacterial PPE family.

This is an uncharacterized protein from Mycobacterium tuberculosis (strain CDC 1551 / Oshkosh).